Reading from the N-terminus, the 88-residue chain is Small ribosomal subunit protein bS20 (88 aa).

Disordered regions lie at residues M1 to R25 and G61 to A88.

This sequence belongs to the bacterial ribosomal protein bS20 family.

Binds directly to 16S ribosomal RNA. The sequence is that of Small ribosomal subunit protein bS20 from Jannaschia sp. (strain CCS1).